The chain runs to 180 residues: Ribosome rescue factor SmrB (180 aa).

Residues 98-173 (LDLHGLTQLI…GDAALLLLVE (76 aa)) enclose the Smr domain.

Belongs to the SmrB family. Associates with collided ribosomes, but not with correctly translating polysomes.

Its function is as follows. Acts as a ribosome collision sensor. Detects stalled/collided disomes (pairs of ribosomes where the leading ribosome is stalled and a second ribosome has collided with it) and endonucleolytically cleaves mRNA at the 5' boundary of the stalled ribosome. Stalled/collided disomes form a new interface (primarily via the 30S subunits) that binds SmrB. Cleaved mRNA becomes available for tmRNA ligation, leading to ribosomal subunit dissociation and rescue of stalled ribosomes. The sequence is that of Ribosome rescue factor SmrB from Proteus mirabilis (strain HI4320).